The primary structure comprises 466 residues: Uronate isomerase (466 aa).

Belongs to the metallo-dependent hydrolases superfamily. Uronate isomerase family.

The catalysed reaction is D-glucuronate = D-fructuronate. It catalyses the reaction aldehydo-D-galacturonate = keto-D-tagaturonate. It functions in the pathway carbohydrate metabolism; pentose and glucuronate interconversion. In Lachnoclostridium phytofermentans (strain ATCC 700394 / DSM 18823 / ISDg) (Clostridium phytofermentans), this protein is Uronate isomerase.